A 361-amino-acid chain; its full sequence is Ornithine carbamoyltransferase, mitochondrial (361 aa).

Residues 1-24 constitute a mitochondrion transit peptide; sequence MIPTARCGALRQKIPVQAVRQYSS. Residues 89–92, Arg-140, His-167, and Gln-170 contribute to the carbamoyl phosphate site; that span reads STRT. The L-ornithine site is built by Asn-207, Asp-273, Ser-277, and Met-278. The active-site Proton acceptor is Cys-315. Carbamoyl phosphate contacts are provided by residues 315–316 and Arg-342; that span reads CL.

This sequence belongs to the aspartate/ornithine carbamoyltransferase superfamily. OTCase family. As to quaternary structure, homotrimer.

The protein resides in the mitochondrion matrix. The catalysed reaction is carbamoyl phosphate + L-ornithine = L-citrulline + phosphate + H(+). It participates in amino-acid biosynthesis; L-arginine biosynthesis; L-arginine from L-ornithine and carbamoyl phosphate: step 1/3. The sequence is that of Ornithine carbamoyltransferase, mitochondrial (arg1) from Aspergillus terreus.